A 446-amino-acid polypeptide reads, in one-letter code: Tubulin beta-2 chain (446 aa).

GTP-binding residues include Q11, E69, S138, G142, T143, G144, N204, and N226. E69 lines the Mg(2+) pocket. Residues 426–446 (QEAGIDEEEEYEEEAPAEHEE) are disordered. Positions 429–440 (GIDEEEEYEEEA) are enriched in acidic residues.

This sequence belongs to the tubulin family. As to quaternary structure, dimer of alpha and beta chains. A typical microtubule is a hollow water-filled tube with an outer diameter of 25 nm and an inner diameter of 15 nM. Alpha-beta heterodimers associate head-to-tail to form protofilaments running lengthwise along the microtubule wall with the beta-tubulin subunit facing the microtubule plus end conferring a structural polarity. Microtubules usually have 13 protofilaments but different protofilament numbers can be found in some organisms and specialized cells. Requires Mg(2+) as cofactor.

It is found in the cytoplasm. The protein resides in the cytoskeleton. Functionally, tubulin is the major constituent of microtubules, a cylinder consisting of laterally associated linear protofilaments composed of alpha- and beta-tubulin heterodimers. Microtubules grow by the addition of GTP-tubulin dimers to the microtubule end, where a stabilizing cap forms. Below the cap, tubulin dimers are in GDP-bound state, owing to GTPase activity of alpha-tubulin. The polypeptide is Tubulin beta-2 chain (Hypocrea virens (Gliocladium virens)).